A 521-amino-acid chain; its full sequence is GMP synthase [glutamine-hydrolyzing] (521 aa).

Residues 8-203 (KILILDFGAQ…VVDVCGCQTL (196 aa)) form the Glutamine amidotransferase type-1 domain. The Nucleophile role is filled by C85. Catalysis depends on residues H177 and E179. The GMPS ATP-PPase domain occupies 204-396 (WTAANIIDDQ…LGLPRTMVYR (193 aa)). 231–237 (SGGVDSS) serves as a coordination point for ATP.

In terms of assembly, homodimer.

It catalyses the reaction XMP + L-glutamine + ATP + H2O = GMP + L-glutamate + AMP + diphosphate + 2 H(+). It functions in the pathway purine metabolism; GMP biosynthesis; GMP from XMP (L-Gln route): step 1/1. In terms of biological role, catalyzes the synthesis of GMP from XMP. This Stenotrophomonas maltophilia (strain K279a) protein is GMP synthase [glutamine-hydrolyzing].